A 460-amino-acid chain; its full sequence is MLTIYNTLSKTKEVFKPLDGNKVRMYVCGMTVYDYCHLGHGRSMVAFDLVTRWLRKSGYELTYVRNITDIDDKIINRANENGETFDALTARMIDAMHEDERRLNILKPDQEPRATDHIAGMHAMIQTLIDKGYAYAPGNGDVYYRVGKFVGYGKLSRKKIEDLRIGARIEVDEAKQDPLDFVLWKGVKPGEPYWDSPWGPGRPGWHIECSVMSTCCLGESFDIHGGGSDLEFPHHENEIAQSEAATGKQYANAWMHCGMIRINGEKMSKSLNNFFTIRDVLDVYHPEVVRYLLVASHYRSAINYSEDSLRDAKGALERFYHALRGLPRVAAKGGEEFVERFSVAMNDDFGTPEACAVLFDLVREINRLRDSDPDAAAGLAGRLRELGDVLGVLQLEADDFLRAGAEGKVDAAEVEALIQARLQARADKNWAESDRIRDQLTAMGVVLEDSKGATTWRLAD.

Cys28 serves as a coordination point for Zn(2+). Residues 30 to 40 (MTVYDYCHLGH) carry the 'HIGH' region motif. Cys209, His234, and Glu238 together coordinate Zn(2+). Positions 266–270 (KMSKS) match the 'KMSKS' region motif. Lys269 is a binding site for ATP.

Belongs to the class-I aminoacyl-tRNA synthetase family. Monomer. It depends on Zn(2+) as a cofactor.

It is found in the cytoplasm. It catalyses the reaction tRNA(Cys) + L-cysteine + ATP = L-cysteinyl-tRNA(Cys) + AMP + diphosphate. In Pseudomonas putida (strain W619), this protein is Cysteine--tRNA ligase.